Here is a 228-residue protein sequence, read N- to C-terminus: 7-cyano-7-deazaguanine synthase (228 aa).

Residue 11-21 participates in ATP binding; the sequence is LSGGLDSATCL. Cys-191, Cys-201, Cys-204, and Cys-207 together coordinate Zn(2+).

It belongs to the QueC family. It depends on Zn(2+) as a cofactor.

It carries out the reaction 7-carboxy-7-deazaguanine + NH4(+) + ATP = 7-cyano-7-deazaguanine + ADP + phosphate + H2O + H(+). It functions in the pathway purine metabolism; 7-cyano-7-deazaguanine biosynthesis. Functionally, catalyzes the ATP-dependent conversion of 7-carboxy-7-deazaguanine (CDG) to 7-cyano-7-deazaguanine (preQ(0)). In Azoarcus sp. (strain BH72), this protein is 7-cyano-7-deazaguanine synthase.